The following is a 338-amino-acid chain: Protein FosB (338 aa).

Disordered stretches follow at residues 1–54 (MFQA…PGSF) and 80–179 (AQSQ…RREL). The span at 13-31 (SRCSSSPSAESQYLSSVDS) shows a compositional bias: polar residues. Position 27 is a phosphoserine (serine 27). Over residues 123–137 (PSTSTSTSGPVSARP) the composition is skewed to low complexity. Residues 155–218 (EEKRRVRRER…ERLEFVLVAH (64 aa)) enclose the bZIP domain. The basic motif stretch occupies residues 157 to 182 (KRRVRRERNKLAAAKCRNRRRELTDR). The interval 183 to 211 (LQAETDQLEEEKAELESEIAELQKEKERL) is leucine-zipper. Disordered regions lie at residues 222-276 (CKIP…PPNL) and 315-338 (AGSQRTSGSEQPSDPLNSPSLLAL). The span at 256-265 (LPPPPPPPLP) shows a compositional bias: pro residues. A compositionally biased stretch (polar residues) spans 266–276 (FQSSRDAPPNL).

It belongs to the bZIP family. Fos subfamily. As to quaternary structure, heterodimer; binds to DNA as heterodimer. Component of an AP-1 transcription factor complex; composed of FOS-JUN heterodimers. As part of the AP-1 transcription factor complex, forms heterodimers with JUN, JUNB or JUND, thereby binding to the AP-1 consensus sequence and stimulating transcription. Phosphorylated; phosphorylation is induced by chronic electroconvulsive seizure (ECS) treatment. Expressed in brain. Expressed in pyramidal cells in CA1 and CA3, in the dentate gyrus and the nucleus accumbens (at protein level).

It localises to the nucleus. Functionally, heterodimerizes with proteins of the JUN family to form an AP-1 transcription factor complex, thereby enhancing their DNA binding activity to an AP-1 consensus sequence 5'-TGA[GC]TCA-3' and enhancing their transcriptional activity. Exhibits transactivation activity in vitro. As part of the AP-1 complex, facilitates enhancer selection together with cell-type-specific transcription factors by collaboratively binding to nucleosomal enhancers and recruiting the SWI/SNF (BAF) chromatin remodeling complex to establish accessible chromatin. Together with JUN, plays a role in activation-induced cell death of T cells by binding to the AP-1 promoter site of FASLG/CD95L, and inducing its transcription in response to activation of the TCR/CD3 signaling pathway. Involved in the display of nurturing behavior towards newborns. May play a role in neurogenesis in the hippocampus and in learning and memory-related tasks by regulating the expression of various genes involved in neurogenesis, depression and epilepsy. Implicated in behavioral responses related to morphine reward and spatial memory. This Rattus norvegicus (Rat) protein is Protein FosB.